Here is a 79-residue protein sequence, read N- to C-terminus: Sulfur carrier protein TusA (79 aa).

The Cysteine persulfide intermediate role is filled by cysteine 17.

Belongs to the sulfur carrier protein TusA family.

Its subcellular location is the cytoplasm. Sulfur carrier protein which probably makes part of a sulfur-relay system. The chain is Sulfur carrier protein TusA from Pasteurella multocida (strain Pm70).